The sequence spans 3232 residues: MRCMLSYRDQFMSESQARHLAATMRVVLSSIASAPQQSLADVDMCSSLDYQTLSRWNLKSPVMMEVCVHDLVQQNCCSRPTCQAVASWDGCLTYDEMSILSSHLAQRLRAAGVKPGVFVALCLDRCKWAVIGILAVLKAGGAFCALDSSYPVSRLQDMCRDLEITIVLTVKTNIQHASPLADTVILLDDDLYSESALSSAQKCASRSSLSPHDPVYAVFTSGSTGKPKGIIMEHASFSACALSSMEPLHIGPQDRVLHFASYAFDLSLFEILAPLIAGATVVIPSEKARLENLPCAMTDLGATWAFLTPTVARLYRPTQMPTLKTLCLGGEAVNASDIKSWSSKNLISGYNPAECCPLGISGLLNDHMPRALGSTFPSQMAWIVDPEDHEKLLPVGAIGELAIEGPVVARGYVHDLKSSDSSTPFVVKTPTWLCRFRSNINRSNRIYLTGDLARQDCDDGSVHYLGRKDDQVKIHGQRVELAEIEQHIEQHFSSLATKAVVMLLRPISGRTVLTALVMPHQRLENGEKTSNSLLMELADINQDFRATLALAASKLRLALPSHMVPSVYLPIRHFPTTKGGKIDRGHLQSLLLSLPPEYLYGSEEATTHQGEEPKSDREKLLQGCFAQALDLPRTRIDLDSNFFQLGGDSLSAMKLLALALEEGISSIAYQDIFSHPTLREIVIVSTSATSREPLSSETVETPPFSLIKDPEMLIQIASEQCGSGVGKADIEDIYPCTHLQQSLMASTAHNPNAYVAILAFKLKSGVDRTRLERAWHIACSGHTILRTRLVQTDTGDCYQVVVKQPPHWTETNEVSDDGSTDSLLRTSFGLGRPLIQSHLSTDQLFVAMHHALYDGWSLPMLIGELDLAYRELSVRRLPCLKNYVKYTMDSADAAASFWQAELQDADPVHFPAPSSLDYKPQPCAAMTVSVPLVNSPRRNVTLATEIQFAWAMTVYTYTGCKDVIFGLISSGRAAPVAQIESILGPTFACTPLRVSIDPQGKLGEALDDLQYTIVEQSMFVHFGAQAIRQLGPNAAAACNFQTVLAVEADGPETGEEEGSWFTRYDFLSDVASFSSYALTLRCKLSTRGVEINAVYDKLMVDERQMGRILAQFEHILTQIHSNETVHDDIGGLDKLSVSDWRQLQAWNIDLPPAHPKGLGAHQAIQAKCQAQPDATAIDAWDGCVTYGELERRAEKLAGLVRSHVSKPDQVVVLYFSKSWLTVVAQLAVLKAGAAFITLEISQPVHYLQRVISALGPVLVLTSEDLFSAAEDLQENAVPVMAVDKDDLSDATARTSQASSSACTVECDLMYIIATSGTTGMPKIVMTDHQAFMTNASPLMNGLGITSDSRVFQFCGYSFDLLIVEHFLTLLAGGCICIPSLHNRNNRFAASIVELEANWVGSPSSVLQLLDPQTVPTVKTIMQAGERLQQGLVDRWASHVRLINAYGPAECSVGALARDTVRPDTDDVQNLGFATGSVCWIVNAETSEKLLPVPIGAEGELIIEGHTLSRGYLGDADKTNASFLRLPNWLRDFRADRGQSQGHRVYLTGDIVRQNSDGSMSFVRRKDAQVKIRGQRVELTDVEHQVERCFIGAHQVVTDIVQIPNSQSSILVALVLTKDAMTNHKQQESLLDQKSAGGLSILAPTSSFTANANAAETALQDRMPAYMVPDLFVPVSDLPREASGKIGRKAIKQYLASLTQQDWSRYSSTRKVPPSNATEHEISAIWARVLQIEPHTFGVHDSFFRLGGDSISGMQVAAACGVAGISVTVKDMFEYRTIRKLALARGETQQLTVGTTSTVSNASGIRQKKALHPFYPEGRLEVYMERMQSRLGQAIERIYPCSPIQQGILMSHARNPHHYDEVIQWKVAGDVSCDISRMQRAWREVVSRHGILRTLFLQVSEDSFLDQVVLKNYSPDISVCTNEEDVEPYRPFEDSVPMHHLLVFQRSADDVTVHLRIHHALVDGLSLHIIRRDLELAYQERLDELAQPPGYHEYISYLQEKRSRKSLQEYWSSYLQGATGSLFPAVQDEPASDGQYFGAVEIELGSIAKLTQFCEEHKLGVTVVLHVVWAVIVQRYAATDEVCFGYMTSGRHVPVTNVENVVGPLFNMLIGRVKLAYHLSVLSTMYAYQENFINSLDHQHQSLVETLHSIGSSAGDLFNTLITVVNDQPEDHVSQSALRLVGDSVQSRSEYPITLNILNHADKIKMQLSYHTSLLSGVSANTIAKAFRFVLQRTLEQPHELLRALPVLDEDQMNIVFAQNRCMPPQVDDFIHDTIHQQCLRCPDSPSVCAWDGNFTYRQLDDLSSALSEEIVRKGAGPEVTIPIVLEKTRWTPVAILAVLKSGSSFVLMDSTHPAARVGSIVQAIGPPVIIVSAQTRSKVATFSTDVVEVGDWLAREVPFEKQQGTRQTGLLKATNAAYLVFTSGSTGKPKGAIVEHASLSTAAKYMASRLHIDSASRVLQFSSHAWDIPVTEVLVTLRMGGCVCVPSEEERTGNLAKASERMKVNWALWTPTVARLFKPEEFPHLKTLVFAGEALSATDLETWCDRVRLVQGYGPAECSLISTVTDPLTRSDNPRCIGLPSGCVAWVVNRDNHELLAPPGATGELVLEGPIVGRGYLGDPGRAASAFISPPAWLMRLRGSGSSNRLYKTGDLVRQHVSSGLLTFVGRNDDQVKVRGQRVEPGEVEGQVAQVFPGSQVIVLVVKKSAGAVLAALVLQNGEDRSSAGETANLFPPPSLAFAALAKAAFSKLRETMPTYMIPSIMLPISYLPKAATGKADRNLLRDRVASLSDGEIEAYVAASVSHRPASTAMEAELQRLVGQVLQRPLHSISLDEDLFRLGMDSLTAMTLASAARRRGWEVSVPIIFQHSRVSDLARIVEQGQHGISSRAQLEEDRVVLNKRLVSLLPEICTKWDLREDQITHIAPTTYYQHMALASDHEAFFGLYFSKPVASEALKAAASRVVKLHSILRTAFVPLEDTYVQLTLCDFDLPSQEIQTNEAEVSAAMELFCRDAADKTAGFGVPVTKLILMLDRQGDCLSLLLRLQRAQFDGVSVMRIMADWRSALEHASCSWEPAPSLDYADFALARVAQNTPDVFGMWRDVLQGSSMTYLVPQQEYISMTDRGHAERLVTSSCDIPLPEPAPGYTMATVAKAAWAICLARETESEDLLFLQLVRNRHLALDGIDKMVGCSLNYVPVRVPLRRDWKISDLLHWLHQQHIRTMAGDTATGRCRG.

An adenylation (A) domain 1 region spans residues 90–474; that stretch reads GCLTYDEMSI…LGRKDDQVKI (385 aa). The Carrier 1 domain maps to 617-686; the sequence is REKLLQGCFA…TLREIVIVST (70 aa). Residue S649 is modified to O-(pantetheine 4'-phosphoryl)serine. The segment at 731-1122 is condensation (C) domain 1; sequence EDIYPCTHLQ…EHILTQIHSN (392 aa). The adenylation (A) domain 2 stretch occupies residues 1165–1572; it reads QAKCQAQPDA…RRKDAQVKIR (408 aa). The Carrier 2 domain occupies 1717-1785; the sequence is TEHEISAIWA…TIRKLALARG (69 aa). An O-(pantetheine 4'-phosphoryl)serine modification is found at S1749. Residues 1835–2252 are condensation (C) domain 2; sequence ERIYPCSPIQ…ALPVLDEDQM (418 aa). The segment at 2276 to 2675 is adenylation (A) domain 3; the sequence is QQCLRCPDSP…GRNDDQVKVR (400 aa). The 69-residue stretch at 2810–2878 folds into the Carrier 3 domain; that stretch reads MEAELQRLVG…RVSDLARIVE (69 aa). S2842 carries the post-translational modification O-(pantetheine 4'-phosphoryl)serine. The segment at 2943-3218 is cyclization (Cyc) domain; sequence LYFSKPVASE…LLHWLHQQHI (276 aa).

It belongs to the NRP synthetase family.

Its pathway is alkaloid biosynthesis; ergot alkaloid biosynthesis. In terms of biological role, D-lysergyl-peptide-synthetase subunit 1; part of the gene cluster that mediates the biosynthesis of fungal ergot alkaloid. DmaW catalyzes the first step of ergot alkaloid biosynthesis by condensing dimethylallyl diphosphate (DMAP) and tryptophan to form 4-dimethylallyl-L-tryptophan. The second step is catalyzed by the methyltransferase easF that methylates 4-dimethylallyl-L-tryptophan in the presence of S-adenosyl-L-methionine, resulting in the formation of 4-dimethylallyl-L-abrine. The catalase easC and the FAD-dependent oxidoreductase easE then transform 4-dimethylallyl-L-abrine to chanoclavine-I which is further oxidized by easD in the presence of NAD(+), resulting in the formation of chanoclavine-I aldehyde. Agroclavine dehydrogenase easG then mediates the conversion of chanoclavine-I aldehyde to agroclavine via a non-enzymatic adduct reaction: the substrate is an iminium intermediate that is formed spontaneously from chanoclavine-I aldehyde in the presence of glutathione. The presence of easA is not required to complete this reaction. Further conversion of agroclavine to paspalic acid is a two-step process involving oxidation of agroclavine to elymoclavine and of elymoclavine to paspalic acid, the second step being performed by the elymoclavine oxidase cloA. Paspalic acid is then further converted to D-lysergic acid. Ergopeptines are assembled from D-lysergic acid and three different amino acids by the D-lysergyl-peptide-synthetases composed each of a monomudular and a trimodular nonribosomal peptide synthetase subunit. LpsB and lpsC encode the monomodular subunits responsible for D-lysergic acid activation and incorporation into the ergopeptine backbone. LpsA1 and A2 subunits encode the trimodular nonribosomal peptide synthetase assembling the tripeptide portion of ergopeptines. LpsA1 is responsible for formation of the major ergopeptine, ergotamine, and lpsA2 for alpha-ergocryptine, the minor ergopeptine of the total alkaloid mixture elaborated by C.purpurea. D-lysergyl-tripeptides are assembled by the nonribosomal peptide synthetases and released as N-(D-lysergyl-aminoacyl)-lactams. Cyclolization of the D-lysergyl-tripeptides is performed by the Fe(2+)/2-ketoglutarate-dependent dioxygenase easH which introduces a hydroxyl group into N-(D-lysergyl-aminoacyl)-lactam at alpha-C of the aminoacyl residue followed by spontaneous condensation with the terminal lactam carbonyl group. In Claviceps purpurea (Ergot fungus), this protein is D-lysergyl-peptide-synthetase subunit 1.